A 201-amino-acid chain; its full sequence is dCTP deaminase, dUMP-forming (201 aa).

Residues 101–106 (KSSLGR), Asp119, 127–129 (TLE), Gln148, Tyr162, and Gln174 each bind dCTP. Catalysis depends on Glu129, which acts as the Proton donor/acceptor. Polar residues predominate over residues 166–183 (EYSSRYQGQRGPTASRSF). The disordered stretch occupies residues 166-201 (EYSSRYQGQRGPTASRSFLNFHRTDVSGTEAGRSSS).

The protein belongs to the dCTP deaminase family. As to quaternary structure, homotrimer.

The catalysed reaction is dCTP + 2 H2O = dUMP + NH4(+) + diphosphate. It participates in pyrimidine metabolism; dUMP biosynthesis; dUMP from dCTP: step 1/1. In terms of biological role, bifunctional enzyme that catalyzes both the deamination of dCTP to dUTP and the hydrolysis of dUTP to dUMP without releasing the toxic dUTP intermediate. This chain is dCTP deaminase, dUMP-forming, found in Leifsonia xyli subsp. xyli (strain CTCB07).